The following is a 515-amino-acid chain: Endoglucanase 23 (515 aa).

Residues 1–29 form the signal peptide; the sequence is MALLSAPVRRRRSRVRVLLVCCCLLLALA. Catalysis depends on Asp95, which acts as the Nucleophile. Residues Asn178, Asn375, and Asn384 are each glycosylated (N-linked (GlcNAc...) asparagine). The active site involves His426. Asn452 carries N-linked (GlcNAc...) asparagine glycosylation. Catalysis depends on residues Asp477 and Glu486.

Belongs to the glycosyl hydrolase 9 (cellulase E) family.

It is found in the secreted. The enzyme catalyses Endohydrolysis of (1-&gt;4)-beta-D-glucosidic linkages in cellulose, lichenin and cereal beta-D-glucans.. The chain is Endoglucanase 23 (GLU12) from Oryza sativa subsp. japonica (Rice).